A 633-amino-acid polypeptide reads, in one-letter code: Alpha-amylase (633 aa).

Catalysis depends on glutamate 123, which acts as the Nucleophile. Aspartate 214 (proton donor) is an active-site residue.

This sequence belongs to the glycosyl hydrolase 57 family.

The enzyme catalyses Endohydrolysis of (1-&gt;4)-alpha-D-glucosidic linkages in polysaccharides containing three or more (1-&gt;4)-alpha-linked D-glucose units.. The polypeptide is Alpha-amylase (amyA) (Pyrococcus horikoshii (strain ATCC 700860 / DSM 12428 / JCM 9974 / NBRC 100139 / OT-3)).